We begin with the raw amino-acid sequence, 168 residues long: Putative gustatory receptor clone PTE03 (168 aa).

Over T1–Q25 the chain is Extracellular. The cysteines at positions 22 and 104 are disulfide-linked. Residues L26–Y45 traverse the membrane as a helical segment. Topologically, residues D46–L67 are cytoplasmic. A helical transmembrane segment spans residues V68–I88. Residues L89–N121 are Extracellular-facing. A helical transmembrane segment spans residues I122–Y143. Residues F144–T165 are Cytoplasmic-facing. The helical transmembrane segment at C166 to S168 threads the bilayer.

The protein belongs to the G-protein coupled receptor 1 family. In terms of tissue distribution, tongue specific.

Its subcellular location is the cell membrane. Functionally, possible taste receptor. This is Putative gustatory receptor clone PTE03 (Olr1145) from Rattus norvegicus (Rat).